A 244-amino-acid chain; its full sequence is Small ribosomal subunit protein uS3 (244 aa).

The KH type-2 domain maps to 38–106 (IRKYLNARLA…EVQINIFEVK (69 aa)). Residues 222–235 (TGRRNDNAGGNRDK) show a composition bias toward basic and acidic residues. The disordered stretch occupies residues 222 to 244 (TGRRNDNAGGNRDKNFKRKRANR).

This sequence belongs to the universal ribosomal protein uS3 family. In terms of assembly, part of the 30S ribosomal subunit. Forms a tight complex with proteins S10 and S14.

Binds the lower part of the 30S subunit head. Binds mRNA in the 70S ribosome, positioning it for translation. This Parabacteroides distasonis (strain ATCC 8503 / DSM 20701 / CIP 104284 / JCM 5825 / NCTC 11152) protein is Small ribosomal subunit protein uS3.